Consider the following 317-residue polypeptide: tRNA dimethylallyltransferase (317 aa).

16 to 23 (GPTASGKS) lines the ATP pocket. Substrate is bound at residue 18–23 (TASGKS). Interaction with substrate tRNA stretches follow at residues 41 to 44 (DSAQ), 165 to 169 (QRIQR), and 247 to 252 (RCVGYR).

The protein belongs to the IPP transferase family. As to quaternary structure, monomer. Mg(2+) is required as a cofactor.

It catalyses the reaction adenosine(37) in tRNA + dimethylallyl diphosphate = N(6)-dimethylallyladenosine(37) in tRNA + diphosphate. Functionally, catalyzes the transfer of a dimethylallyl group onto the adenine at position 37 in tRNAs that read codons beginning with uridine, leading to the formation of N6-(dimethylallyl)adenosine (i(6)A). The polypeptide is tRNA dimethylallyltransferase (Nitrosomonas europaea (strain ATCC 19718 / CIP 103999 / KCTC 2705 / NBRC 14298)).